Here is a 217-residue protein sequence, read N- to C-terminus: Adenylate kinase (217 aa).

10–15 contacts ATP; the sequence is GAGKGT. Residues 30 to 59 are NMP; it reads STGDMFRAAIKAGTALGMKAKEYMDAGSLV. Residues Thr31, Arg36, 57–59, 85–88, and Gln92 contribute to the AMP site; these read SLV and GFPR. The segment at 126–163 is LID; the sequence is GRRICRQCGGTYHMVFNPPAAEAVCDKCGGELYQRSDD. Arg127 serves as a coordination point for ATP. Zn(2+)-binding residues include Cys130 and Cys133. Residue 136–137 participates in ATP binding; that stretch reads TY. 2 residues coordinate Zn(2+): Cys150 and Cys153. AMP is bound by residues Arg160 and Arg171. Gln199 is an ATP binding site.

Belongs to the adenylate kinase family. Monomer.

The protein resides in the cytoplasm. The enzyme catalyses AMP + ATP = 2 ADP. It participates in purine metabolism; AMP biosynthesis via salvage pathway; AMP from ADP: step 1/1. Functionally, catalyzes the reversible transfer of the terminal phosphate group between ATP and AMP. Plays an important role in cellular energy homeostasis and in adenine nucleotide metabolism. This Desulfitobacterium hafniense (strain DSM 10664 / DCB-2) protein is Adenylate kinase.